A 386-amino-acid chain; its full sequence is ADP,ATP carrier protein, mitochondrial (386 aa).

A mitochondrion-targeting transit peptide spans 1–76 (ADNQHPTVYQ…ANASPVFVQA (76 aa)). Solcar repeat units follow at residues 83–176 (AAFA…FKRL), 188–281 (KWFA…LKPV), and 289–375 (DSFF…LQVI). A run of 5 helical transmembrane segments spans residues 85 to 112 (FATDFLMGGVSAAVSKTAAAPIERVKLL), 153 to 177 (TANVIRYFPTQALNFAFKDYFKRLF), 186 to 206 (YWKWFAGNLASGGGAGASSLL), 257 to 278 (FNISCVGIIVYRGLYFGMYDSL), and 292 to 312 (FASFALGWLITNGAGLASYPI). ADP is bound by residues R158 and K170. An ADP-binding site is contributed by R316. Positions 316–321 (RRRMMM) are important for transport activity. The Nucleotide carrier signature motif signature appears at 316–321 (RRRMMM). Residues 352–372 (AGANVLRAVAGAGVLAGYDKL) traverse the membrane as a helical segment.

The protein belongs to the mitochondrial carrier (TC 2.A.29) family. As to quaternary structure, monomer.

It localises to the mitochondrion inner membrane. The enzyme catalyses ADP(in) + ATP(out) = ADP(out) + ATP(in). The matrix-open state (m-state) is inhibited by the membrane-permeable bongkrekic acid (BKA). The cytoplasmic-open state (c-state) is inhibited by the membrane-impermeable toxic inhibitor carboxyatractyloside (CATR). ADP:ATP antiporter that mediates import of ADP into the mitochondrial matrix for ATP synthesis, and export of ATP out to fuel the cell. Cycles between the cytoplasmic-open state (c-state) and the matrix-open state (m-state): operates by the alternating access mechanism with a single substrate-binding site intermittently exposed to either the cytosolic (c-state) or matrix (m-state) side of the inner mitochondrial membrane. This is ADP,ATP carrier protein, mitochondrial (ANT1) from Solanum tuberosum (Potato).